Reading from the N-terminus, the 120-residue chain is 5-hydroxyisourate hydrolase 2 (120 aa).

Residues His10, Arg48, and Tyr117 each contribute to the substrate site.

Belongs to the transthyretin family. 5-hydroxyisourate hydrolase subfamily. Homotetramer.

It carries out the reaction 5-hydroxyisourate + H2O = 5-hydroxy-2-oxo-4-ureido-2,5-dihydro-1H-imidazole-5-carboxylate + H(+). In terms of biological role, catalyzes the hydrolysis of 5-hydroxyisourate (HIU) to 2-oxo-4-hydroxy-4-carboxy-5-ureidoimidazoline (OHCU). This chain is 5-hydroxyisourate hydrolase 2, found in Rhizobium meliloti (strain 1021) (Ensifer meliloti).